The chain runs to 114 residues: uncharacterized protein (114 aa).

This is an uncharacterized protein from Bacillus subtilis (strain 168).